Here is a 451-residue protein sequence, read N- to C-terminus: TERF1-interacting nuclear factor 2 (451 aa).

A2 is modified (N-acetylalanine). Residues 229–257 form a disordered region; it reads NPLPKAKPGTHLPQGPSSRTHPEPLAGRH. Residues 256–278 carry the TBM motif; it reads RHFNLAPLGRRRVQSQWASTRGG. The short motif at 262 to 268 is the Nuclear localization signal element; it reads PLGRRRV. S295 carries the phosphoserine modification. Glycyl lysine isopeptide (Lys-Gly) (interchain with G-Cter in SUMO2) cross-links involve residues K302, K306, K341, and K353.

In terms of assembly, monomer. Found in a complex with POT1; TERF1 and TNKS1. Component of the shelterin complex (telosome) composed of TERF1, TERF2, TINF2, TERF2IP ACD and POT1. Interacts with TERF1, TERF2 and ACD. In terms of tissue distribution, detected in heart, brain, placenta, lung, liver, skeletal muscle, kidney and pancreas.

It is found in the nucleus. Its subcellular location is the chromosome. The protein resides in the telomere. It localises to the nucleus matrix. In terms of biological role, component of the shelterin complex (telosome) that is involved in the regulation of telomere length and protection. Shelterin associates with arrays of double-stranded TTAGGG repeats added by telomerase and protects chromosome ends; without its protective activity, telomeres are no longer hidden from the DNA damage surveillance and chromosome ends are inappropriately processed by DNA repair pathways. Plays a role in shelterin complex assembly. Isoform 1 may have additional role in tethering telomeres to the nuclear matrix. This is TERF1-interacting nuclear factor 2 (TINF2) from Homo sapiens (Human).